A 385-amino-acid polypeptide reads, in one-letter code: S-adenosylmethionine synthase (385 aa).

Position 16 (His16) interacts with ATP. A Mg(2+)-binding site is contributed by Asp18. Glu44 provides a ligand contact to K(+). Glu57 and Gln100 together coordinate L-methionine. The interval 100 to 110 is flexible loop; sequence QSPDINQGVDR. Residues 164–166, 230–231, Asp239, 245–246, Ala262, and Lys266 each bind ATP; these read DGK, KF, and RK. Asp239 serves as a coordination point for L-methionine. Lys270 is an L-methionine binding site.

The protein belongs to the AdoMet synthase family. Homotetramer; dimer of dimers. It depends on Mg(2+) as a cofactor. Requires K(+) as cofactor.

It localises to the cytoplasm. The enzyme catalyses L-methionine + ATP + H2O = S-adenosyl-L-methionine + phosphate + diphosphate. Its pathway is amino-acid biosynthesis; S-adenosyl-L-methionine biosynthesis; S-adenosyl-L-methionine from L-methionine: step 1/1. Catalyzes the formation of S-adenosylmethionine (AdoMet) from methionine and ATP. The overall synthetic reaction is composed of two sequential steps, AdoMet formation and the subsequent tripolyphosphate hydrolysis which occurs prior to release of AdoMet from the enzyme. The chain is S-adenosylmethionine synthase from Helicobacter pylori (strain ATCC 700392 / 26695) (Campylobacter pylori).